The primary structure comprises 235 residues: Thrombin-like enzyme bilineobin (235 aa).

The region spanning 1–227 is the Peptidase S1 domain; sequence IIGGDECNIN…HLDWIQSIIA (227 aa). Cystine bridges form between cysteine 7/cysteine 141, cysteine 28/cysteine 44, cysteine 78/cysteine 234, cysteine 120/cysteine 188, cysteine 152/cysteine 167, and cysteine 178/cysteine 203. Histidine 43 functions as the Charge relay system in the catalytic mechanism. Asparagine 45, asparagine 57, and asparagine 81 each carry an N-linked (GlcNAc...) asparagine glycan. Aspartate 88 serves as the catalytic Charge relay system. 2 N-linked (GlcNAc...) asparagine glycosylation sites follow: asparagine 132 and asparagine 148. Serine 182 serves as the catalytic Charge relay system. N-linked (GlcNAc...) asparagine glycosylation is present at asparagine 229.

This sequence belongs to the peptidase S1 family. Snake venom subfamily. In terms of assembly, monomer. Post-translationally, glycosylated. In terms of tissue distribution, expressed by the venom gland.

The protein resides in the secreted. Not inhibited by hirudin. Functionally, thrombin-like snake venom serine protease that has coagulant activity by releasing fibrinopeptides A and B from fibrinogen alpha (FGA) and beta (FGB), with a preference for beta chain. The polypeptide is Thrombin-like enzyme bilineobin (Agkistrodon bilineatus (Cantil)).